A 341-amino-acid chain; its full sequence is Protein quaking-A (341 aa).

Residues 87–153 (FVPVKEYPDY…WEHLNEDLHV (67 aa)) enclose the KH domain. The short motif at 276–279 (PPTP) is the SH3-binding element. A Nuclear localization signal motif is present at residues 324–330 (RVHPYQR).

This sequence belongs to the quaking family. As to quaternary structure, homodimer; does not require RNA to homodimerize.

The protein localises to the cytoplasm. The protein resides in the nucleus. Its function is as follows. RNA reader protein, which recognizes and binds specific RNAs, thereby regulating RNA metabolic processes, such as pre-mRNA splicing, circular RNA (circRNA) formation, mRNA export, mRNA stability and/or translation. Involved in various cellular processes, such as mRNA storage into stress granules, apoptosis, interferon response, glial cell fate and development. Binds to the 5'-NACUAAY-N(1,20)-UAAY-3' RNA core sequence. Acts as a mRNA modification reader that specifically recognizes and binds mRNA transcripts modified by internal N(7)-methylguanine (m7G). Promotes the formation of circular RNAs (circRNAs): acts by binding to sites flanking circRNA-forming exons. CircRNAs are produced by back-splicing circularization of pre-mRNAs. Required to protect and promote stability of mRNAs which promotes oligodendrocyte differentiation. Acts as an important regulator of muscle development: required during early skeletal myofibril formation by regulating the accumulation of the muscle-specific tropomyosin-3 (tpm3) transcripts. The sequence is that of Protein quaking-A from Danio rerio (Zebrafish).